A 339-amino-acid chain; its full sequence is Lipoate-protein ligase A (339 aa).

The BPL/LPL catalytic domain maps to 28–211; sequence NPDSHTLFLW…AFREYYRDTD (184 aa). ATP is bound by residues Arg-70, 75 to 78, and Lys-129; that span reads GAVF. Position 129 (Lys-129) interacts with (R)-lipoate.

It belongs to the LplA family. In terms of assembly, monomer.

Its subcellular location is the cytoplasm. It catalyses the reaction L-lysyl-[lipoyl-carrier protein] + (R)-lipoate + ATP = N(6)-[(R)-lipoyl]-L-lysyl-[lipoyl-carrier protein] + AMP + diphosphate + H(+). It functions in the pathway protein modification; protein lipoylation via exogenous pathway; protein N(6)-(lipoyl)lysine from lipoate: step 1/2. It participates in protein modification; protein lipoylation via exogenous pathway; protein N(6)-(lipoyl)lysine from lipoate: step 2/2. Its function is as follows. Catalyzes both the ATP-dependent activation of exogenously supplied lipoate to lipoyl-AMP and the transfer of the activated lipoyl onto the lipoyl domains of lipoate-dependent enzymes. The protein is Lipoate-protein ligase A of Psychrobacter cryohalolentis (strain ATCC BAA-1226 / DSM 17306 / VKM B-2378 / K5).